Here is a 106-residue protein sequence, read N- to C-terminus: Vacuolar ATPase assembly integral membrane protein VMA21 homolog (106 aa).

The disordered stretch occupies residues M1–D26. Topologically, residues M1–S32 are cytoplasmic. Residues F33–L53 traverse the membrane as a helical segment. At L54–K69 the chain is on the lumenal side. The helical transmembrane segment at V70 to I90 threads the bilayer. The Cytoplasmic segment spans residues Y91–D106.

It belongs to the VMA21 family.

The protein resides in the endoplasmic reticulum membrane. It localises to the endoplasmic reticulum-Golgi intermediate compartment membrane. The protein localises to the cytoplasmic vesicle. Its subcellular location is the COPII-coated vesicle membrane. In terms of biological role, required for the assembly of the V0 complex of the vacuolar ATPase (V-ATPase) in the endoplasmic reticulum. This Drosophila ananassae (Fruit fly) protein is Vacuolar ATPase assembly integral membrane protein VMA21 homolog.